Reading from the N-terminus, the 287-residue chain is MEIRGIFGVKVGMSQVFTTNNERLPITVIYCEPNQVAGVKTEAKDKYSATLLSFDTVENKKLNKPQQGFFEKNNLKPTKHLQEIRNMTGFEMGQQITPQNLFQVGEYVDVSAISKGRGFTGAIKRWNFKIGPLGHGAGYPHRFQGSVQAGRGGASAQRVFKGKKMSGHYGHEKVTVQNLRIVGFDEANMLVLVSGAIAGPEGGVVLIRTAKKKPGVVKPIELAVQTEKAPEAKPAKLSKKKQAKELAKAQAANQQTVEAKVDTPVVEPKPTEVKKAAPVVEKKGEDK.

A disordered region spans residues 228 to 287 (KAPEAKPAKLSKKKQAKELAKAQAANQQTVEAKVDTPVVEPKPTEVKKAAPVVEKKGEDK). Residues 269 to 287 (KPTEVKKAAPVVEKKGEDK) are compositionally biased toward basic and acidic residues.

The protein belongs to the universal ribosomal protein uL3 family. In terms of assembly, part of the 50S ribosomal subunit. Forms a cluster with proteins L14 and L19.

Its function is as follows. One of the primary rRNA binding proteins, it binds directly near the 3'-end of the 23S rRNA, where it nucleates assembly of the 50S subunit. The protein is Large ribosomal subunit protein uL3 of Mycoplasma pneumoniae (strain ATCC 29342 / M129 / Subtype 1) (Mycoplasmoides pneumoniae).